A 250-amino-acid chain; its full sequence is Proteasome subunit alpha type-7-B (250 aa).

Residue K62 forms a Glycyl lysine isopeptide (Lys-Gly) (interchain with G-Cter in ubiquitin) linkage.

Belongs to the peptidase T1A family. Component of the 20S core complex of the 26S proteasome. The 26S proteasome is composed of a core protease (CP), known as the 20S proteasome, capped at one or both ends by the 19S regulatory particle (RP/PA700). The 20S proteasome core is composed of 28 subunits that are arranged in four stacked rings, resulting in a barrel-shaped structure. The two end rings are each formed by seven alpha subunits, and the two central rings are each formed by seven beta subunits. The catalytic chamber with the active sites is on the inside of the barrel.

It is found in the cytoplasm. The protein localises to the nucleus. The proteasome is a multicatalytic proteinase complex which is characterized by its ability to cleave peptides with Arg, Phe, Tyr, Leu, and Glu adjacent to the leaving group at neutral or slightly basic pH. The proteasome has an ATP-dependent proteolytic activity. The protein is Proteasome subunit alpha type-7-B (PAD2) of Arabidopsis thaliana (Mouse-ear cress).